Consider the following 326-residue polypeptide: GTP 3',8-cyclase (326 aa).

The Radical SAM core domain maps to 7–232 (GFGRSFPYLR…PRAADAGPAR (226 aa)). A GTP-binding site is contributed by Arg-16. Residues Cys-23 and Cys-27 each coordinate [4Fe-4S] cluster. Tyr-29 is an S-adenosyl-L-methionine binding site. Cys-30 contacts [4Fe-4S] cluster. Arg-65 provides a ligand contact to GTP. S-adenosyl-L-methionine is bound at residue Gly-69. Residue Thr-96 coordinates GTP. Residue Ser-120 participates in S-adenosyl-L-methionine binding. Lys-157 lines the GTP pocket. Met-191 provides a ligand contact to S-adenosyl-L-methionine. Residues Cys-254 and Cys-257 each coordinate [4Fe-4S] cluster. Residue 259–261 (RLR) participates in GTP binding. [4Fe-4S] cluster is bound at residue Cys-271.

The protein belongs to the radical SAM superfamily. MoaA family. As to quaternary structure, monomer and homodimer. The cofactor is [4Fe-4S] cluster.

It catalyses the reaction GTP + AH2 + S-adenosyl-L-methionine = (8S)-3',8-cyclo-7,8-dihydroguanosine 5'-triphosphate + 5'-deoxyadenosine + L-methionine + A + H(+). It participates in cofactor biosynthesis; molybdopterin biosynthesis. Its function is as follows. Catalyzes the cyclization of GTP to (8S)-3',8-cyclo-7,8-dihydroguanosine 5'-triphosphate. This Stenotrophomonas maltophilia (strain K279a) protein is GTP 3',8-cyclase.